Here is a 484-residue protein sequence, read N- to C-terminus: tRNA sulfurtransferase (484 aa).

Residues 61 to 165 form the THUMP domain; that stretch reads TLLVELLGRI…NDKMMLIKAR (105 aa). ATP is bound by residues 183-184, Lys265, Gly287, and Gln296; that span reads LI. Cysteines 344 and 456 form a disulfide. A Rhodanese domain is found at 404–484; the sequence is LSANEVILDI…DNVKVLNKIS (81 aa). Cys456 serves as the catalytic Cysteine persulfide intermediate.

The protein belongs to the ThiI family.

The protein resides in the cytoplasm. It catalyses the reaction [ThiI sulfur-carrier protein]-S-sulfanyl-L-cysteine + a uridine in tRNA + 2 reduced [2Fe-2S]-[ferredoxin] + ATP + H(+) = [ThiI sulfur-carrier protein]-L-cysteine + a 4-thiouridine in tRNA + 2 oxidized [2Fe-2S]-[ferredoxin] + AMP + diphosphate. The enzyme catalyses [ThiS sulfur-carrier protein]-C-terminal Gly-Gly-AMP + S-sulfanyl-L-cysteinyl-[cysteine desulfurase] + AH2 = [ThiS sulfur-carrier protein]-C-terminal-Gly-aminoethanethioate + L-cysteinyl-[cysteine desulfurase] + A + AMP + 2 H(+). Its pathway is cofactor biosynthesis; thiamine diphosphate biosynthesis. Functionally, catalyzes the ATP-dependent transfer of a sulfur to tRNA to produce 4-thiouridine in position 8 of tRNAs, which functions as a near-UV photosensor. Also catalyzes the transfer of sulfur to the sulfur carrier protein ThiS, forming ThiS-thiocarboxylate. This is a step in the synthesis of thiazole, in the thiamine biosynthesis pathway. The sulfur is donated as persulfide by IscS. The protein is tRNA sulfurtransferase of Histophilus somni (strain 2336) (Haemophilus somnus).